We begin with the raw amino-acid sequence, 578 residues long: Isocitrate dehydrogenase kinase/phosphatase (578 aa).

Residues 315-321 and Lys336 each bind ATP; that span reads APGIRGM. Residue Asp371 is part of the active site.

The protein belongs to the AceK family.

The protein localises to the cytoplasm. The enzyme catalyses L-seryl-[isocitrate dehydrogenase] + ATP = O-phospho-L-seryl-[isocitrate dehydrogenase] + ADP + H(+). Functionally, bifunctional enzyme which can phosphorylate or dephosphorylate isocitrate dehydrogenase (IDH) on a specific serine residue. This is a regulatory mechanism which enables bacteria to bypass the Krebs cycle via the glyoxylate shunt in response to the source of carbon. When bacteria are grown on glucose, IDH is fully active and unphosphorylated, but when grown on acetate or ethanol, the activity of IDH declines drastically concomitant with its phosphorylation. This Escherichia coli (strain ATCC 8739 / DSM 1576 / NBRC 3972 / NCIMB 8545 / WDCM 00012 / Crooks) protein is Isocitrate dehydrogenase kinase/phosphatase.